A 524-amino-acid polypeptide reads, in one-letter code: GMP synthase [glutamine-hydrolyzing] (524 aa).

The region spanning 12 to 201 (TILVLDFGSQ…AVDICKASQS (190 aa)) is the Glutamine amidotransferase type-1 domain. Residue Cys88 is the Nucleophile of the active site. Catalysis depends on residues His175 and Glu177. The GMPS ATP-PPase domain maps to 202 to 399 (WNMENFIDTE…LGISHELVWR (198 aa)). 230-236 (SGGVDST) serves as a coordination point for ATP. Positions 303, 461, 516, and 522 each coordinate XMP.

As to quaternary structure, homodimer. Mg(2+) serves as cofactor.

Its subcellular location is the cytoplasm. It localises to the cytosol. The enzyme catalyses XMP + L-glutamine + ATP + H2O = GMP + L-glutamate + AMP + diphosphate + 2 H(+). The protein operates within purine metabolism; GMP biosynthesis; GMP from XMP (L-Gln route): step 1/1. In terms of biological role, catalyzes the conversion of xanthine monophosphate (XMP) to GMP in the presence of glutamine and ATP through an adenyl-XMP intermediate. The protein is GMP synthase [glutamine-hydrolyzing] (GUA1) of Kluyveromyces lactis (strain ATCC 8585 / CBS 2359 / DSM 70799 / NBRC 1267 / NRRL Y-1140 / WM37) (Yeast).